The sequence spans 109 residues: Nucleoid-associated protein BU482 (109 aa).

Belongs to the YbaB/EbfC family. Homodimer.

The protein localises to the cytoplasm. Its subcellular location is the nucleoid. Binds to DNA and alters its conformation. May be involved in regulation of gene expression, nucleoid organization and DNA protection. The polypeptide is Nucleoid-associated protein BU482 (Buchnera aphidicola subsp. Acyrthosiphon pisum (strain APS) (Acyrthosiphon pisum symbiotic bacterium)).